We begin with the raw amino-acid sequence, 431 residues long: MIRRWLTSRLYDAFLVCAFFVSAPRIFYKVFFHGKYIDSWKIRFGVQKPFVKGEGPLVWFHGASVGEVSLLAPLLNRWREEFPEWRFVVTTCSEAGVHTARRLYESLGATVFVLPLDLSCIIKSVVRKLAPDIVIFSEGDCWLHFLTESKRLGAKAFLINGKLSEHSCKRFSFLKRLGRNYFAPLDLLILQDELYKQRFMQIGISSDKIHVTGNMKTFIESSLATNRRDFWRAKLQISSQDRLIVLGSVHPKDVEVWAEVVSHFHNSSTKILWVPRHLEKLKEHAKLLEKAGILFGLWSQGASFRQYNSLIMDAMGVLKDIYSAADIAFVGGTFDPSVGGHNLLEPLQKEVPLMFGPYIYSQSVLAEKLREKEAGLSVNKETLLDVVTDLLQNEKNRQAYIEKGKSFLKQEENSFQQTWEILKSQITCMKI.

The helical; Signal-anchor transmembrane segment at 5-27 (WLTSRLYDAFLVCAFFVSAPRIF) threads the bilayer. Catalysis depends on Glu-67, which acts as the Proton acceptor. CMP contacts are provided by residues 275-276 (PR), 315-317 (MGV), and 342-345 (NLLE).

It belongs to the glycosyltransferase group 1 family. Glycosyltransferase 30 subfamily.

Its subcellular location is the cell inner membrane. It catalyses the reaction lipid IVA (E. coli) + CMP-3-deoxy-beta-D-manno-octulosonate = alpha-Kdo-(2-&gt;6)-lipid IVA (E. coli) + CMP + H(+). The enzyme catalyses alpha-Kdo-(2-&gt;6)-lipid IVA (E. coli) + CMP-3-deoxy-beta-D-manno-octulosonate = alpha-Kdo-(2-&gt;4)-alpha-Kdo-(2-&gt;6)-lipid IVA (E. coli) + CMP + H(+). It carries out the reaction alpha-Kdo-(2-&gt;4)-alpha-Kdo-(2-&gt;6)-lipid IVA (E. coli) + CMP-3-deoxy-beta-D-manno-octulosonate = alpha-Kdo-(2-&gt;8)-alpha-Kdo-(2-&gt;4)-alpha-Kdo-(2-&gt;6)-lipid IVA (E. coli) + CMP + H(+). It functions in the pathway bacterial outer membrane biogenesis; LPS core biosynthesis. Functionally, involved in lipopolysaccharide (LPS) biosynthesis. Catalyzes the transfer of three 3-deoxy-D-manno-octulosonate (Kdo) residues from CMP-Kdo to lipid IV(A), the tetraacyldisaccharide-1,4'-bisphosphate precursor of lipid A. Thus generates the genus-specific LPS epitope of Chlamydia, composed of the trisaccharide alpha-Kdo-(2-&gt;8)-alpha-Kdo-(2-&gt;4)-alpha-Kdo. The chain is 3-deoxy-D-manno-octulosonic acid transferase (waaA) from Chlamydia trachomatis serovar A (strain ATCC VR-571B / DSM 19440 / HAR-13).